We begin with the raw amino-acid sequence, 115 residues long: MEARAQARYIRVTPMKARRVVDLIRGMDATEAQAVLRFAPQAASVPVGKVLDSAIANAAHNYDHTDASSLVISEAYVDEGPTLKRFRPRAQGRAYRIRKRTSHITVVVSSKEGTR.

This sequence belongs to the universal ribosomal protein uL22 family. As to quaternary structure, part of the 50S ribosomal subunit.

In terms of biological role, this protein binds specifically to 23S rRNA; its binding is stimulated by other ribosomal proteins, e.g. L4, L17, and L20. It is important during the early stages of 50S assembly. It makes multiple contacts with different domains of the 23S rRNA in the assembled 50S subunit and ribosome. Its function is as follows. The globular domain of the protein is located near the polypeptide exit tunnel on the outside of the subunit, while an extended beta-hairpin is found that lines the wall of the exit tunnel in the center of the 70S ribosome. In Streptomyces griseus subsp. griseus (strain JCM 4626 / CBS 651.72 / NBRC 13350 / KCC S-0626 / ISP 5235), this protein is Large ribosomal subunit protein uL22.